We begin with the raw amino-acid sequence, 464 residues long: Neuronal acetylcholine receptor subunit beta-3 (464 aa).

Residues 1–30 (MTGFLRVFLVLSATLSGSWVTLTATAGLSS) form the signal peptide. Residues 31 to 238 (VAEHEDALLR…VTYSFVLRRL (208 aa)) are Extracellular-facing. N-linked (GlcNAc...) asparagine glycans are attached at residues N55 and N172. A disulfide bridge connects residues C159 and C173. Transmembrane regions (helical) follow at residues 239-263 (PLFYTLFLIIPCLGLSFLTVLVFYL), 271-288 (LSLSTSVLVSLTVFLLVI), and 305-326 (YLLFIMIFVTLSIIVTVFVINV). At 327–434 (HHRSSSTYHP…WKFVAQVLDR (108 aa)) the chain is on the cytoplasmic side. A helical membrane pass occupies residues 435 to 453 (IFLWLFLIASVLGSILIFI).

This sequence belongs to the ligand-gated ion channel (TC 1.A.9) family. Acetylcholine receptor (TC 1.A.9.1) subfamily. Beta-3/CHRNB3 sub-subfamily. Neuronal AChR seems to be composed of two different type of subunits: alpha and beta. CHRNB3/beta-3 subunit is only able to form functional nAChRs when co-assembled with another beta subunit. Participates in pentameric assemblies along with CHRNA4/alpha-4 and CHRNB2/beta-2 subunits and with CHRNA6/alpha-6 as well, forming stoichiometries such as (CHRNA3:CHRNB4)2:CHRNB3, (CHRNA4:CHRNB2)2:CHRNB3 or (CHRNA6:CHRNB2)2:CHRNB3.

It is found in the synaptic cell membrane. It localises to the cell membrane. It catalyses the reaction Ca(2+)(in) = Ca(2+)(out). The catalysed reaction is K(+)(in) = K(+)(out). The enzyme catalyses Na(+)(in) = Na(+)(out). Its activity is regulated as follows. Activated by a myriad of ligands such as acetylcholine, cytisine, nicotine, choline and epibatidine. Functionally, component of neuronal acetylcholine receptors (nAChRs) that function as pentameric, ligand-gated cation channels with high calcium permeability among other activities. nAChRs are excitatory neurotrasnmitter receptors formed by a collection of nAChR subunits known to mediate synaptic transmission in the nervous system and the neuromuscular junction. Each nAchR subunit confers differential attributes to channel properties, including activation, deactivation and desensitization kinetics, pH sensitivity, cation permeability, and binding to allosteric modulators. Has an accessory rather than functional role and is only able to form functional nAChRs when co-assembled with another beta subunit. Participates in pentameric assemblies along with CHRNA3, CHRNA4, CHRNA6, CHRNB2 and CHRNB4. Modulates receptor assembly and increases receptor sensitivity to nicotine when associated with CHRNB2, CHRNA4 and/or CHRNA6 as well as CHRNA3 and CHRNB4. Seems to play a role in nicotine addiction. This is Neuronal acetylcholine receptor subunit beta-3 (Chrnb3) from Rattus norvegicus (Rat).